We begin with the raw amino-acid sequence, 89 residues long: UPF0237 protein LMOf2365_0562 (89 aa).

Residues 4–78 (VLTVIGKDNV…EDLQVKIHIQ (75 aa)) form the ACT domain.

This sequence belongs to the UPF0237 family.

This Listeria monocytogenes serotype 4b (strain F2365) protein is UPF0237 protein LMOf2365_0562.